The sequence spans 637 residues: Clathrin coat assembly protein AP180A (637 aa).

The 126-residue stretch at 1–126 folds into the ENTH domain; the sequence is MTTYFKLVKG…REFGKIKKDY (126 aa). The disordered stretch occupies residues 555 to 637; that stretch reads TQNHLQQQQQ…YANNLNLIDM (83 aa). 2 stretches are compositionally biased toward low complexity: residues 560 to 579 and 600 to 622; these read QQQQ…QPQQ and QPQN…TQQP. The segment at 587–637 is clathrin-binding; sequence AGANPVTNITGTVQPQNFPFYPQQQPQPEQSQTQQPVLGNQYANNLNLIDM. Over residues 623–637 the composition is skewed to polar residues; that stretch reads VLGNQYANNLNLIDM.

Belongs to the AP180 family. Interacts with PAN1 and the clathrin heavy and light chains CHC1 and CLC1.

It is found in the bud. Its subcellular location is the bud neck. The protein localises to the cell membrane. The protein resides in the cytoplasm. In terms of biological role, involved in endocytosis and clathrin cage assembly. The protein is Clathrin coat assembly protein AP180A (YAP1801) of Saccharomyces cerevisiae (strain ATCC 204508 / S288c) (Baker's yeast).